The following is a 274-amino-acid chain: Putative pyruvate, phosphate dikinase regulatory protein (274 aa).

An ADP-binding site is contributed by Gly151–Thr158.

The protein belongs to the pyruvate, phosphate/water dikinase regulatory protein family. PDRP subfamily.

The catalysed reaction is N(tele)-phospho-L-histidyl/L-threonyl-[pyruvate, phosphate dikinase] + ADP = N(tele)-phospho-L-histidyl/O-phospho-L-threonyl-[pyruvate, phosphate dikinase] + AMP + H(+). The enzyme catalyses N(tele)-phospho-L-histidyl/O-phospho-L-threonyl-[pyruvate, phosphate dikinase] + phosphate + H(+) = N(tele)-phospho-L-histidyl/L-threonyl-[pyruvate, phosphate dikinase] + diphosphate. Functionally, bifunctional serine/threonine kinase and phosphorylase involved in the regulation of the pyruvate, phosphate dikinase (PPDK) by catalyzing its phosphorylation/dephosphorylation. This is Putative pyruvate, phosphate dikinase regulatory protein from Pelagibacter ubique (strain HTCC1062).